The chain runs to 314 residues: Ketimine reductase mu-crystallin (314 aa).

R47 serves as a coordination point for 3,3',5-triiodo-L-thyronine. NADPH is bound by residues S91, H92, R119, A144, V146, Q147, N168, R169, T170, N173, T205, and M206. E257 contacts 3,3',5-triiodo-L-thyronine. NADPH is bound at residue S292.

Belongs to the ornithine cyclodeaminase/mu-crystallin family. In terms of assembly, homodimer. Binds the thyroid hormone triiodothyronine (T3); T3 binding inhibits enzymatic activity.

The protein localises to the cytoplasm. The catalysed reaction is L-pipecolate + NAD(+) = Delta(1)-piperideine-2-carboxylate + NADH + H(+). It carries out the reaction L-pipecolate + NADP(+) = Delta(1)-piperideine-2-carboxylate + NADPH + H(+). The enzyme catalyses L-proline + NADP(+) = 1-pyrroline-2-carboxylate + NADPH + H(+). It catalyses the reaction L-proline + NAD(+) = 1-pyrroline-2-carboxylate + NADH + H(+). The catalysed reaction is (3R)-1,4-thiomorpholine-3-carboxylate + NAD(+) = 3,4-dehydrothiomorpholine-3-carboxylate + NADH + 2 H(+). It carries out the reaction (3R)-1,4-thiomorpholine-3-carboxylate + NADP(+) = 3,4-dehydrothiomorpholine-3-carboxylate + NADPH + 2 H(+). The enzyme catalyses (S)-cystathionine ketimine + NADH + 2 H(+) = (3R,5S)-2,3,5,6,7-pentahydro-1,4-thiazepine-3,5-dicarboxylate + NAD(+). It catalyses the reaction (S)-cystathionine ketimine + NADPH + 2 H(+) = (3R,5S)-2,3,5,6,7-pentahydro-1,4-thiazepine-3,5-dicarboxylate + NADP(+). The catalysed reaction is (R)-lanthionine ketimine + NADPH + 2 H(+) = (3R,5R)-1,4-thiomorpholine-3,5-dicarboxylate + NADP(+). It carries out the reaction Delta(2)-thiazoline-2-carboxylate + NADPH + 2 H(+) = L-thiazolidine-2-carboxylate + NADP(+). Functionally, catalyzes the NAD(P)H-dependent reduction of imine double bonds of a number of cyclic ketimine substrates, including sulfur-containing cyclic ketimines. Under physiological conditions, it efficiently catalyzes delta(1)-piperideine-2-carboxylate (P2C) and delta(1)-pyrroline-2-carboxylate (Pyr2C) reduction, suggesting a central role in lysine and glutamate metabolism. Additional substrates are (S)-cystathionine ketimine (CysK), 3,4-dehydrothiomorpholine-3-carboxylate (AECK), and (R)-lanthionine ketimine (LK) that is reduced at very low rate compared to other substrates. Also catalyzes the NAD(P)H-dependent reduction of delta(2)-thiazoline-2-carboxylate (T2C). This Bos taurus (Bovine) protein is Ketimine reductase mu-crystallin (CRYM).